The chain runs to 294 residues: Acetyl-coenzyme A carboxylase carboxyl transferase subunit beta (294 aa).

Positions 30 to 294 constitute a CoA carboxyltransferase N-terminal domain; that stretch reads IMTKCPECKK…PEVGGEADGE (265 aa). Residues C34, C37, C53, and C56 each coordinate Zn(2+). The C4-type zinc-finger motif lies at 34–56; that stretch reads CPECKKIMYTKELQKNLMVCNYC.

Belongs to the AccD/PCCB family. As to quaternary structure, acetyl-CoA carboxylase is a heterohexamer composed of biotin carboxyl carrier protein (AccB), biotin carboxylase (AccC) and two subunits each of ACCase subunit alpha (AccA) and ACCase subunit beta (AccD). Requires Zn(2+) as cofactor.

The protein resides in the cytoplasm. It catalyses the reaction N(6)-carboxybiotinyl-L-lysyl-[protein] + acetyl-CoA = N(6)-biotinyl-L-lysyl-[protein] + malonyl-CoA. Its pathway is lipid metabolism; malonyl-CoA biosynthesis; malonyl-CoA from acetyl-CoA: step 1/1. Component of the acetyl coenzyme A carboxylase (ACC) complex. Biotin carboxylase (BC) catalyzes the carboxylation of biotin on its carrier protein (BCCP) and then the CO(2) group is transferred by the transcarboxylase to acetyl-CoA to form malonyl-CoA. The protein is Acetyl-coenzyme A carboxylase carboxyl transferase subunit beta of Listeria monocytogenes serotype 4a (strain HCC23).